A 285-amino-acid chain; its full sequence is Polyamine aminopropyltransferase (285 aa).

A PABS domain is found at 5-241; sequence DSWFTEHFQA…GWWSVTLSSK (237 aa). An S-methyl-5'-thioadenosine-binding site is contributed by Gln35. Spermidine-binding residues include His66 and Asp90. S-methyl-5'-thioadenosine contacts are provided by residues Asp110 and 141-142; that span reads DG. The Proton acceptor role is filled by Asp160. Spermidine is bound at residue 160–163; that stretch reads DSTD. Pro167 is a binding site for S-methyl-5'-thioadenosine.

Belongs to the spermidine/spermine synthase family. In terms of assembly, homodimer or homotetramer.

The protein localises to the cytoplasm. It catalyses the reaction S-adenosyl 3-(methylsulfanyl)propylamine + putrescine = S-methyl-5'-thioadenosine + spermidine + H(+). The protein operates within amine and polyamine biosynthesis; spermidine biosynthesis; spermidine from putrescine: step 1/1. Catalyzes the irreversible transfer of a propylamine group from the amino donor S-adenosylmethioninamine (decarboxy-AdoMet) to putrescine (1,4-diaminobutane) to yield spermidine. The chain is Polyamine aminopropyltransferase from Xylella fastidiosa (strain 9a5c).